The primary structure comprises 919 residues: Chaperone protein ClpC2, chloroplastic (919 aa).

The transit peptide at 1–54 (MAGTLLQPVALGTTFAGRVSGQRWKSHGTRRPPSMLAMSLSRPVKMAAFVGLRS) directs the protein to the chloroplast. In terms of domain architecture, Clp R spans 89–231 (FERFTEKAIK…RTQVIRMIGE (143 aa)). Repeat regions lie at residues 92–157 (FTEK…IGRG) and 167–231 (FTPR…MIGE). Residues 252-499 (LEEYGTNLTK…RVRLRHAQVP (248 aa)) form an i region. Residue 297–304 (GEPGVGKT) participates in ATP binding. Residues 506–541 (DKELKQITKDKNEAVRSQDFEKAGELRDREMELKAQ) form the UVR domain. Positions 566 to 757 (VNEADIQHIV…LLIMTSNVGS (192 aa)) are II. 640 to 647 (GPTGVGKS) is an ATP binding site.

This sequence belongs to the ClpA/ClpB family. ClpC subfamily.

It is found in the plastid. The protein resides in the chloroplast. Molecular chaperone that may interact with a ClpP-like protease involved in degradation of denatured proteins in the chloroplast. The protein is Chaperone protein ClpC2, chloroplastic (CLPC2) of Oryza sativa subsp. japonica (Rice).